Reading from the N-terminus, the 1119-residue chain is MSAPSLRARAAGLGLLLCAVLGRAGRSDSGGRGELGQPSGVAAERPCPTTCRCLGDLLDCSRKRLARLPEPLPSWVARLDLSHNRLSFIKASSMSHLQSLREVKLNNNELETIPNLGPVSANITLLSLAGNRIVEILPEHLKEFQSLETLDLSSNNISELQTAFPALQLKYLYLNSNRVTSMEPGYFDNLANTLLVLKLNRNRISAIPPKMFKLPQLQHLELNRNKIKNVDGLTFQGLGALKSLKMQRNGVTKLMDGAFWGLSNMEILQLDHNNLTEITKGWLYGLLMLQELHLSQNAINRISPDAWEFCQKLSELDLTFNHLSRLDDSSFLGLSLLNTLHIGNNRVSYIADCAFRGLSSLKTLDLKNNEISWTIEDMNGAFSGLDKLRRLILQGNRIRSITKKAFTGLDALEHLDLSDNAIMSLQGNAFSQMKKLQQLHLNTSSLLCDCQLKWLPQWVAENNFQSFVNASCAHPQLLKGRSIFAVSPDGFVCDDFPKPQITVQPETQSAIKGSNLSFICSAASSSDSPMTFAWKKDNELLHDAEMENYAHLRAQGGEVMEYTTILRLREVEFASEGKYQCVISNHFGSSYSVKAKLTVNMLPSFTKTPMDLTIRAGAMARLECAAVGHPAPQIAWQKDGGTDFPAARERRMHVMPEDDVFFIVDVKIEDIGVYSCTAQNSAGSISANATLTVLETPSFLRPLLDRTVTKGETAVLQCIAGGSPPPKLNWTKDDSPLVVTERHFFAAGNQLLIIVDSDVSDAGKYTCEMSNTLGTERGNVRLSVIPTPTCDSPQMTAPSLDDDGWATVGVVIIAVVCCVVGTSLVWVVIIYHTRRRNEDCSITNTDETNLPADIPSYLSSQGTLADRQDGYVSSESGSHHQFVTSSGAGFFLPQHDSSGTCHIDNSSEADVEAATDLFLCPFLGSTGPMYLKGNVYGSDPFETYHTGCSPDPRTVLMDHYEPSYIKKKECYPCSHPSEESCERSFSNISWPSHVRKLLNTSYSHNEGPGMKNLCLNKSSLDFSANPEPASVASSNSFMGTFGKALRRPHLDAYSSFGQPSDCQPRAFYLKAHSSPDLDSGSEEDGKERTDFQEENHICTFKQTLENYRTPNFQSYDLDT.

A signal peptide spans 1 to 24; sequence MSAPSLRARAAGLGLLLCAVLGRA. Residues 38-74 enclose the LRRNT domain; it reads PSGVAAERPCPTTCRCLGDLLDCSRKRLARLPEPLPS. 15 LRR repeats span residues 75–96, 99–120, 122–142, 146–167, 168–189, 193–214, 216–237, 240–261, 264–285, 288–309, 312–333, 336–357, 360–382, 387–408, and 411–432; these read WVARLDLSHNRLSFIKASSMSH, SLREVKLNNNELETIPNLGPVS, NITLLSLAGNRIVEILPEHLK, SLETLDLSSNNISELQTAFPAL, QLKYLYLNSNRVTSMEPGYFDN, TLLVLKLNRNRISAIPPKMFKL, QLQHLELNRNKIKNVDGLTFQG, ALKSLKMQRNGVTKLMDGAFWG, NMEILQLDHNNLTEITKGWLYG, MLQELHLSQNAINRISPDAWEF, KLSELDLTFNHLSRLDDSSFLG, LLNTLHIGNNRVSYIADCAFRG, SLKTLDLKNNEISWTIEDMNGAF, KLRRLILQGNRIRSITKKAFTG, and ALEHLDLSDNAIMSLQGNAFSQ. N-linked (GlcNAc...) asparagine glycans are attached at residues N122 and N156. A glycan (N-linked (GlcNAc...) asparagine) is linked at N274. N-linked (GlcNAc...) asparagine glycosylation is found at N442, N469, and N515. The region spanning 444–495 is the LRRCT domain; sequence SSLLCDCQLKWLPQWVAENNFQSFVNASCAHPQLLKGRSIFAVSPDGFVCDD. Ig-like C2-type domains are found at residues 499–598, 603–692, and 697–783; these read PQIT…AKLT, PSFT…ATLT, and PSFL…VRLS. 2 disulfide bridges follow: C520–C581 and C624–C676. N688 and N729 each carry an N-linked (GlcNAc...) asparagine glycan. C718 and C767 are oxidised to a cystine. A helical membrane pass occupies residues 810–830; that stretch reads VVIIAVVCCVVGTSLVWVVII. N-linked (GlcNAc...) asparagine glycosylation is found at N905, N987, N999, and N1016. Positions 1073–1093 are disordered; the sequence is SSPDLDSGSEEDGKERTDFQE. Positions 1083–1093 are enriched in basic and acidic residues; it reads EDGKERTDFQE.

Interacts with EGFR, ERBB2 and ERBB4 (in vitro). As to expression, widely expressed.

It localises to the cell membrane. Its subcellular location is the cytoplasmic vesicle membrane. In terms of biological role, may play a role in craniofacial and inner ear morphogenesis during embryonic development. May act within the otic vesicle epithelium to control formation of the lateral semicircular canal in the inner ear, possibly by restricting the expression of NTN1. The sequence is that of Leucine-rich repeats and immunoglobulin-like domains protein 3 (LRIG3) from Homo sapiens (Human).